The sequence spans 418 residues: Probable serine/threonine-protein kinase DDB_G0280461 (418 aa).

The region spanning 14-271 is the Protein kinase domain; that stretch reads KIEENEFSKG…IVQTLDQLAI (258 aa). Residues 20-28 and Lys-41 each bind ATP; that span reads FSKGSFAKV. Asp-139 serves as the catalytic Proton acceptor. Disordered stretches follow at residues 327 to 356 and 377 to 418; these read NNNN…NNNN and SVNS…CLIN. The segment covering 377–402 has biased composition (low complexity); sequence SVNSSFSNSSLGSNGSNSSGTSTSSG. The span at 403-418 shows a compositional bias: basic residues; it reads GKKRSQKRKSWKCLIN.

This sequence belongs to the protein kinase superfamily. TKL Ser/Thr protein kinase family.

The enzyme catalyses L-seryl-[protein] + ATP = O-phospho-L-seryl-[protein] + ADP + H(+). The catalysed reaction is L-threonyl-[protein] + ATP = O-phospho-L-threonyl-[protein] + ADP + H(+). This Dictyostelium discoideum (Social amoeba) protein is Probable serine/threonine-protein kinase DDB_G0280461.